We begin with the raw amino-acid sequence, 416 residues long: Tyrosine--tRNA ligase (416 aa).

Residue Tyr-39 coordinates L-tyrosine. The short motif at 44–53 (CTAPSLHAGH) is the 'HIGH' region element. L-tyrosine contacts are provided by Tyr-176 and Gln-180. The 'KMSKS' region motif lies at 236 to 240 (KMGKT). An ATP-binding site is contributed by Lys-239. An S4 RNA-binding domain is found at 349–414 (ISLVDLLHDT…AGKKRHIKVV (66 aa)).

The protein belongs to the class-I aminoacyl-tRNA synthetase family. TyrS type 1 subfamily. As to quaternary structure, homodimer.

The protein localises to the cytoplasm. It carries out the reaction tRNA(Tyr) + L-tyrosine + ATP = L-tyrosyl-tRNA(Tyr) + AMP + diphosphate + H(+). In terms of biological role, catalyzes the attachment of tyrosine to tRNA(Tyr) in a two-step reaction: tyrosine is first activated by ATP to form Tyr-AMP and then transferred to the acceptor end of tRNA(Tyr). This Wolbachia pipientis wMel protein is Tyrosine--tRNA ligase.